We begin with the raw amino-acid sequence, 934 residues long: MQRYELIRLIGRGGMGEVYLAHDKACSRRVALKKIREDLSDNPLLRKRFLREAKIAADLIHPGIVPVYSICSDGESVYYTMPYIEGFSLKHLLKSVWQKEILSKELEEKTSVKAFLPIFDKICATVEYIHSKGVLHRDLKPDNILLGLFGEVVIVDWGAAIFKHAKELQQEKDEEGFSSYGQKNICYSSMTVPGKIVGTPDYMAPESLLGAEASEKTDIYALGLILYQMLTLSFPYRRKKGRKLPYEDSILSPIEMAPYREIPPSLSQIAMKAIAVDPVQRFSSVQELRKALQPHLQGESEWTTRDILSTKDRKNWKYYEPILLSRYFPVLASSPAQWYNFMLSDMEVNSSVRVECSVTKSSVQEGVGIFFPPSKEADKGEFYCGYGLWFSSQNNELSVSLIKNGIEIQKESQGIIPQQSRFAISIEKSNNKITVFVDQILFILHIDYLPSLGERIEIIIQDLQGISNITILESIGALRVSCLAVPDAFLAEKLYDQAARFYRKIRDSFPGRKESYEAQFRLGVTLLTQIEEQGGDLMQALSTFDLLHGSTGAPLEYLGKALVYQRNGSFVEEIRSLLLALKRYPQHPEIPRLKDHLCFRLYDSLHKHRSEALVFMLLILWIAPEKIGLREEERFLEFLHHRQQSTLFCRIDKTPLQFKSSKMELFLSFWTGFTLFLPELFQRARDLRDYQALIDIFYVVCASGNKEVFSQFAEDLAIFVDEVVFPKSLHNQRGEELVLFVQGLAALQNREYRQAKEFISAVPFALQLYALDLFSLQAFIDEEVKVFSDFLQDIYNSASAEDHKHVLVYMIQVSLWNQDLKQAYELLSKNFPQDKGLIEYSEAFVLWGCYLALTGDRSAVKAHFSRCQFKYGRSALIGKCIDDDSLDYLEGLVWWEKKKTLFQSYFLLRCLHAPKERYEVYRQAYISMENSFFG.

One can recognise a Protein kinase domain in the interval 4 to 296; sequence YELIRLIGRG…ELRKALQPHL (293 aa). ATP contacts are provided by residues 10 to 18 and Lys-33; that span reads IGRGGMGEV. Asp-138 serves as the catalytic Proton acceptor.

This sequence belongs to the protein kinase superfamily. Ser/Thr protein kinase family. In terms of processing, autophosphorylated on serine and threonine residues.

It catalyses the reaction L-seryl-[protein] + ATP = O-phospho-L-seryl-[protein] + ADP + H(+). The catalysed reaction is L-threonyl-[protein] + ATP = O-phospho-L-threonyl-[protein] + ADP + H(+). Together with the serine/threonine kinase Pkn1, may play a role in the specific interactions with host proteins during intracellular growth. This is Serine/threonine-protein kinase PknD from Chlamydia muridarum (strain MoPn / Nigg).